The chain runs to 191 residues: Cell division protein SepF (191 aa).

Residues glutamate 21–threonine 96 form a disordered region. Residues proline 25–serine 56 show a composition bias toward low complexity. Polar residues-rich tracts occupy residues arginine 57 to arginine 69 and histidine 86 to threonine 95.

Belongs to the SepF family. Homodimer. Interacts with FtsZ.

The protein localises to the cytoplasm. Cell division protein that is part of the divisome complex and is recruited early to the Z-ring. Probably stimulates Z-ring formation, perhaps through the cross-linking of FtsZ protofilaments. Its function overlaps with FtsA. The polypeptide is Cell division protein SepF (Streptococcus mutans serotype c (strain ATCC 700610 / UA159)).